Reading from the N-terminus, the 130-residue chain is L-ectoine synthase (130 aa).

Belongs to the ectoine synthase family.

The catalysed reaction is (2S)-4-acetamido-2-aminobutanoate = L-ectoine + H2O. It functions in the pathway amine and polyamine biosynthesis; ectoine biosynthesis; L-ectoine from L-aspartate 4-semialdehyde: step 3/3. Functionally, catalyzes the circularization of gamma-N-acetyl-alpha,gamma-diaminobutyric acid (ADABA) to ectoine (1,4,5,6-tetrahydro-2-methyl-4-pyrimidine carboxylic acid), which is an excellent osmoprotectant. This Mycolicibacterium vanbaalenii (strain DSM 7251 / JCM 13017 / BCRC 16820 / KCTC 9966 / NRRL B-24157 / PYR-1) (Mycobacterium vanbaalenii) protein is L-ectoine synthase.